Consider the following 310-residue polypeptide: Inner membrane protein YfdC (310 aa).

The span at 1 to 12 (MDNDKIDQHSDE) shows a compositional bias: basic and acidic residues. Residues 1–27 (MDNDKIDQHSDEIEVESEEKERGKKIE) are disordered. Residues 1-58 (MDNDKIDQHSDEIEVESEEKERGKKIEIDEDRLPSRAMAIHEHIRQDGEKELERDAMA) are Cytoplasmic-facing. The chain crosses the membrane as a helical span at residues 59–81 (LLWSAIAAGLSMGASLLAKGIFQ). Residues 82 to 90 (VELEGVPGS) lie on the Periplasmic side of the membrane. A helical membrane pass occupies residues 91–113 (FLLENLGYTFGFIIVIMARQQLF). Topologically, residues 114–133 (TENTVTAVLPVMQKPTMSNV) are cytoplasmic. Residues 134–156 (GLLIRLWGVVLLGNILGTGIAAW) traverse the membrane as a helical segment. Residues 157 to 186 (AFEYMPIFNEETRDAFVKIGMDVMKNTPSE) are Periplasmic-facing. The helical transmembrane segment at 187–206 (MFANAIISGWLIATMVWMFP) threads the bilayer. Over 207 to 212 (AAGAAK) the chain is Cytoplasmic. A helical transmembrane segment spans residues 213-232 (IVVIILMTWLIALGDTTHIV). At 233–251 (VGSVEILYLVFNGTLHWSD) the chain is on the periplasmic side. The helical transmembrane segment at 252-274 (FIWPFALPTLAGNICGGTFIFAL) threads the bilayer. The Cytoplasmic portion of the chain corresponds to 275–310 (MSHAQIRNDMSNKRKAEARQKAERAENIKKNYKNPA). A compositionally biased stretch (basic and acidic residues) spans 291-303 (EARQKAERAENIK). The tract at residues 291–310 (EARQKAERAENIKKNYKNPA) is disordered.

It localises to the cell inner membrane. The polypeptide is Inner membrane protein YfdC (yfdC) (Escherichia coli (strain K12)).